The primary structure comprises 254 residues: Major prion protein (254 aa).

An N-terminal signal peptide occupies residues 1–22 (MANLGYWLLALFVTMWTDVGLC). An interaction with ADGRG6 region spans residues 23-38 (KKRPKPGGWNTGGSRY). An interaction with GRB2, ERI3 and SYN1 region spans residues 23 to 231 (KKRPKPGGWN…QAYYDGRRSS (209 aa)). The disordered stretch occupies residues 25–104 (RPKPGGWNTG…HNQWNKPSKP (80 aa)). A Hydroxyproline modification is found at Pro-44. Tandem repeats lie at residues 51 to 58 (PQGGTWGQ), 59 to 66 (PHGGGWGQ), 67 to 74 (PHGGSWGQ), 75 to 82 (PHGGSWGQ), and 83 to 90 (PHGGGWGQ). The tract at residues 51–90 (PQGGTWGQPHGGGWGQPHGGSWGQPHGGSWGQPHGGGWGQ) is 5 X 8 AA tandem repeats of P-H-G-G-G-W-G-Q. Positions 54–94 (GTWGQPHGGGWGQPHGGSWGQPHGGSWGQPHGGGWGQGGGT) are enriched in gly residues. Positions 60, 61, 62, 68, 69, 70, 76, 77, 78, 84, 85, and 86 each coordinate Cu(2+). A disulfide bridge connects residues Cys-178 and Cys-213. N-linked (GlcNAc...) asparagine glycans are attached at residues Asn-180 and Asn-196. A lipid anchor (GPI-anchor amidated serine) is attached at Ser-230. A propeptide spans 231 to 254 (SSTVLFSSPPVILLISFLIFLIVG) (removed in mature form).

The protein belongs to the prion family. As to quaternary structure, monomer and homodimer. Has a tendency to aggregate into amyloid fibrils containing a cross-beta spine, formed by a steric zipper of superposed beta-strands. Soluble oligomers may represent an intermediate stage on the path to fibril formation. Copper binding may promote oligomerization. Interacts with GRB2, APP, ERI3/PRNPIP and SYN1. Mislocalized cytosolically exposed PrP interacts with MGRN1; this interaction alters MGRN1 subcellular location and causes lysosomal enlargement. Interacts with APP. Interacts with KIAA1191. Interacts with ADGRG6. Post-translationally, N-glycosylated. Highly expressed in the brain, lung, kidney and heart. Expressed at low levels in the liver and spleen.

The protein localises to the cell membrane. It localises to the golgi apparatus. Functionally, its primary physiological function is unclear. May play a role in neuronal development and synaptic plasticity. May be required for neuronal myelin sheath maintenance. May promote myelin homeostasis through acting as an agonist for ADGRG6 receptor. May play a role in iron uptake and iron homeostasis. Soluble oligomers are toxic to cultured neuroblastoma cells and induce apoptosis (in vitro). Association with GPC1 (via its heparan sulfate chains) targets PRNP to lipid rafts. Also provides Cu(2+) or Zn(2+) for the ascorbate-mediated GPC1 deaminase degradation of its heparan sulfate side chains. The polypeptide is Major prion protein (Prnp) (Mus musculus (Mouse)).